The primary structure comprises 234 residues: Probable transcriptional regulatory protein PFL_3960 (234 aa).

This sequence belongs to the TACO1 family.

The protein localises to the cytoplasm. The sequence is that of Probable transcriptional regulatory protein PFL_3960 from Pseudomonas fluorescens (strain ATCC BAA-477 / NRRL B-23932 / Pf-5).